The sequence spans 286 residues: Bifunctional protein FolD (286 aa).

NADP(+) contacts are provided by residues 165–167, serine 190, and valine 231; that span reads GRS.

It belongs to the tetrahydrofolate dehydrogenase/cyclohydrolase family. As to quaternary structure, homodimer.

The catalysed reaction is (6R)-5,10-methylene-5,6,7,8-tetrahydrofolate + NADP(+) = (6R)-5,10-methenyltetrahydrofolate + NADPH. The enzyme catalyses (6R)-5,10-methenyltetrahydrofolate + H2O = (6R)-10-formyltetrahydrofolate + H(+). It functions in the pathway one-carbon metabolism; tetrahydrofolate interconversion. Functionally, catalyzes the oxidation of 5,10-methylenetetrahydrofolate to 5,10-methenyltetrahydrofolate and then the hydrolysis of 5,10-methenyltetrahydrofolate to 10-formyltetrahydrofolate. This Bacillus mycoides (strain KBAB4) (Bacillus weihenstephanensis) protein is Bifunctional protein FolD.